Here is a 989-residue protein sequence, read N- to C-terminus: Phosphoenolpyruvate carboxylase (989 aa).

Active-site residues include His175 and Lys630.

The protein belongs to the PEPCase type 1 family. Requires Mg(2+) as cofactor.

It catalyses the reaction oxaloacetate + phosphate = phosphoenolpyruvate + hydrogencarbonate. Functionally, forms oxaloacetate, a four-carbon dicarboxylic acid source for the tricarboxylic acid cycle. The sequence is that of Phosphoenolpyruvate carboxylase from Prochlorococcus marinus (strain MIT 9301).